The primary structure comprises 80 residues: Small ribosomal subunit protein uS17 (80 aa).

It belongs to the universal ribosomal protein uS17 family. In terms of assembly, part of the 30S ribosomal subunit.

In terms of biological role, one of the primary rRNA binding proteins, it binds specifically to the 5'-end of 16S ribosomal RNA. The sequence is that of Small ribosomal subunit protein uS17 from Beijerinckia indica subsp. indica (strain ATCC 9039 / DSM 1715 / NCIMB 8712).